The sequence spans 130 residues: Small ribosomal subunit protein uS8 (130 aa).

It belongs to the universal ribosomal protein uS8 family. Part of the 30S ribosomal subunit.

Functionally, one of the primary rRNA binding proteins, it binds directly to 16S rRNA central domain where it helps coordinate assembly of the platform of the 30S subunit. This is Small ribosomal subunit protein uS8 from Korarchaeum cryptofilum (strain OPF8).